The following is a 138-amino-acid chain: Protein E6 (138 aa).

Zinc fingers lie at residues 25–61 (CNFCTGFLTYQELLEFDYKDFNLLWKDGFVFGCCAAC) and 98–134 (CLICLKRLDLLEKLDICAQHREFHRVRNRWKGVCRHC).

This sequence belongs to the papillomaviridae E6 protein family. Forms homodimers. Interacts with ubiquitin-protein ligase UBE3A/E6-AP; this interaction stimulates UBE3A ubiquitin activity. Interacts with host BAK1.

It localises to the host cytoplasm. Its subcellular location is the host nucleus. Functionally, plays a major role in the induction and maintenance of cellular transformation. E6 associates with host UBE3A/E6-AP ubiquitin-protein ligase and modulates its activity. Protects host keratinocytes from apoptosis by mediating the degradation of host BAK1. May also inhibit host immune response. This is Protein E6 from Homo sapiens (Human).